The chain runs to 142 residues: Ribosome-binding factor A (142 aa).

Positions 123 to 142 (VQRDLDSAPEDDEPETGTGH) are disordered. Over residues 129 to 142 (SAPEDDEPETGTGH) the composition is skewed to acidic residues.

It belongs to the RbfA family. As to quaternary structure, monomer. Binds 30S ribosomal subunits, but not 50S ribosomal subunits or 70S ribosomes.

Its subcellular location is the cytoplasm. Its function is as follows. One of several proteins that assist in the late maturation steps of the functional core of the 30S ribosomal subunit. Associates with free 30S ribosomal subunits (but not with 30S subunits that are part of 70S ribosomes or polysomes). Required for efficient processing of 16S rRNA. May interact with the 5'-terminal helix region of 16S rRNA. This is Ribosome-binding factor A from Methylobacterium radiotolerans (strain ATCC 27329 / DSM 1819 / JCM 2831 / NBRC 15690 / NCIMB 10815 / 0-1).